The chain runs to 553 residues: Chaperonin GroEL (553 aa).

ATP is bound by residues 30-33 (TLGP), K51, 87-91 (DGTTT), G415, and D495.

Belongs to the chaperonin (HSP60) family. In terms of assembly, forms a cylinder of 14 subunits composed of two heptameric rings stacked back-to-back. Interacts with the co-chaperonin GroES.

The protein resides in the cytoplasm. It catalyses the reaction ATP + H2O + a folded polypeptide = ADP + phosphate + an unfolded polypeptide.. In terms of biological role, together with its co-chaperonin GroES, plays an essential role in assisting protein folding. The GroEL-GroES system forms a nano-cage that allows encapsulation of the non-native substrate proteins and provides a physical environment optimized to promote and accelerate protein folding. This chain is Chaperonin GroEL, found in Buchnera aphidicola subsp. Tuberolachnus salignus.